Consider the following 327-residue polypeptide: Thiamine-binding periplasmic protein (327 aa).

The N-terminal stretch at 1 to 18 (MLKKCLPLLLLCTAPVFA) is a signal peptide. Thiamine is bound by residues 59–60 (DG), 161–162 (ST), tryptophan 197, and 215–218 (YTTS).

This sequence belongs to the bacterial solute-binding protein 1 family. Monomer in solution. The complex is composed of two ATP-binding proteins (ThiQ), two transmembrane proteins (ThiP) and a solute-binding protein (ThiB).

Its subcellular location is the periplasm. Its activity is regulated as follows. Transport is inhibited by the sulfhydryl-specific modifier N-ethylmaleimide. Part of the ABC transporter complex ThiBPQ involved in thiamine import. Binds thiamine, thiamine phosphate and thiamine diphosphate with high affinity. This is Thiamine-binding periplasmic protein (thiB) from Escherichia coli (strain K12).